The chain runs to 238 residues: Ribonuclease PH (238 aa).

Phosphate contacts are provided by residues R86 and 124–126; that span reads GTR.

The protein belongs to the RNase PH family. In terms of assembly, homohexameric ring arranged as a trimer of dimers.

The enzyme catalyses tRNA(n+1) + phosphate = tRNA(n) + a ribonucleoside 5'-diphosphate. Phosphorolytic 3'-5' exoribonuclease that plays an important role in tRNA 3'-end maturation. Removes nucleotide residues following the 3'-CCA terminus of tRNAs; can also add nucleotides to the ends of RNA molecules by using nucleoside diphosphates as substrates, but this may not be physiologically important. Probably plays a role in initiation of 16S rRNA degradation (leading to ribosome degradation) during starvation. This Sphingopyxis alaskensis (strain DSM 13593 / LMG 18877 / RB2256) (Sphingomonas alaskensis) protein is Ribonuclease PH.